The primary structure comprises 243 residues: Outer membrane protein A (243 aa).

The next 5 beta stranded transmembrane spans lie at 1–8, 13–21, 48–57, 62–69, and 88–96; these read LAAKLSYP, LDIYTRLGG, PLAAVGVEYA, WATRLDYQ, and MLSLGVSYR. 5 consecutive repeat copies span residues 104–105, 106–107, 108–109, 110–111, and 112–113. A 5 X 2 AA tandem repeats of A-P region spans residues 104–113; sequence APAPAPAPAP. Positions 115–243 constitute an OmpA-like domain; the sequence is VETKLFTLKS…RRVEIEVKGI (129 aa). Cys215 and Cys229 are oxidised to a cystine.

It belongs to the outer membrane OOP (TC 1.B.6) superfamily. OmpA family. In terms of assembly, monomer and homodimer.

It is found in the cell outer membrane. Its function is as follows. With TolR probably plays a role in maintaining the position of the peptidoglycan cell wall in the periplasm. Acts as a porin with low permeability that allows slow penetration of small solutes; an internal gate slows down solute passage. This is Outer membrane protein A from Serratia odorifera.